The sequence spans 1575 residues: Ras GTPase-activating-like protein IQGAP2 (1575 aa).

At Ser-16 the chain carries Phosphoserine. Residues 41-156 (LCHLEEAKRW…YCIHALSLYL (116 aa)) enclose the Calponin-homology (CH) domain. Residue Thr-356 is modified to Phosphothreonine. The 34-residue stretch at 594-627 (ESSEGSWVTLNVQEKYNYYYNTDSKEGSWVPPEL) folds into the WW domain. Phosphoserine is present on residues Ser-595 and Ser-599. IQ domains follow at residues 690 to 719 (QTES…VFAG), 720 to 749 (NVDS…YFED), and 750 to 779 (HKNE…SENP). Thr-782, Thr-881, Thr-1002, and Thr-1269 each carry phosphothreonine. The Ras-GAP domain occupies 933-1182 (YLLLKLFKTA…QEFRKYFQEA (250 aa)). A phosphoserine mark is found at Ser-1279 and Ser-1461.

Functionally, binds to activated CDC42 and RAC1 but does not seem to stimulate their GTPase activity. Associates with calmodulin. The sequence is that of Ras GTPase-activating-like protein IQGAP2 (Iqgap2) from Mus musculus (Mouse).